The primary structure comprises 37 residues: Cytochrome b6-f complex subunit 5 (37 aa).

A helical membrane pass occupies residues 5 to 25 (LLSGIILGLIPVTLSGLLVAA).

It belongs to the PetG family. In terms of assembly, the 4 large subunits of the cytochrome b6-f complex are cytochrome b6, subunit IV (17 kDa polypeptide, PetD), cytochrome f and the Rieske protein, while the 4 small subunits are PetG, PetL, PetM and PetN. The complex functions as a dimer.

It is found in the plastid. The protein resides in the chloroplast thylakoid membrane. Functionally, component of the cytochrome b6-f complex, which mediates electron transfer between photosystem II (PSII) and photosystem I (PSI), cyclic electron flow around PSI, and state transitions. PetG is required for either the stability or assembly of the cytochrome b6-f complex. The protein is Cytochrome b6-f complex subunit 5 of Porphyra purpurea (Red seaweed).